The primary structure comprises 585 residues: Tyramine beta-hydroxylase (585 aa).

The N-terminal stretch at 1-21 (MKCANAAALLFFVLCDIGVHG) is a signal peptide. In terms of domain architecture, DOMON spans 31-142 (SNVTVKWQTD…GTTQFYIAAS (112 aa)). N-linked (GlcNAc...) asparagine glycosylation is found at Asn32 and Asn71. The active site involves Tyr206. 2 disulfide bridges follow: Cys208-Cys258 and Cys247-Cys270. Cu(2+) contacts are provided by His240 and His241. Cu(2+) is bound by residues His308, His386, and His388. 3 disulfide bridges follow: Cys365/Cys477, Cys369/Cys534, and Cys440/Cys462. His386 is a catalytic residue. N-linked (GlcNAc...) asparagine glycosylation is present at Asn449. Cu(2+) is bound at residue Met461. N-linked (GlcNAc...) asparagine glycosylation occurs at Asn483.

It belongs to the copper type II ascorbate-dependent monooxygenase family. It depends on Cu(2+) as a cofactor.

The protein resides in the cytoplasmic vesicle. Its subcellular location is the secretory vesicle. It is found in the synaptic vesicle. The enzyme catalyses tyramine + L-ascorbate + O2 = (R)-octopamine + L-dehydroascorbate + H2O. In terms of biological role, catalyzes the hydroxylation of tyramine into octopamine, a neurotransmitter involved in pharyngeal pumping and egg laying. The sequence is that of Tyramine beta-hydroxylase (tbh-1) from Caenorhabditis briggsae.